A 59-amino-acid polypeptide reads, in one-letter code: uncharacterized protein (59 aa).

Positions 1 to 59 (MAKKPGENTGKNGGIYQEVGPRGGKKDNFATVKDNERLPPTTKPGNGWVLDKRTPDSKK) are disordered. Composition is skewed to basic and acidic residues over residues 24 to 37 (GKKD…DNER) and 50 to 59 (LDKRTPDSKK).

This is an uncharacterized protein from Salmonella phage P22 (Bacteriophage P22).